The following is a 289-amino-acid chain: ATP synthase gamma chain (289 aa).

It belongs to the ATPase gamma chain family. As to quaternary structure, F-type ATPases have 2 components, CF(1) - the catalytic core - and CF(0) - the membrane proton channel. CF(1) has five subunits: alpha(3), beta(3), gamma(1), delta(1), epsilon(1). CF(0) has three main subunits: a, b and c.

Its subcellular location is the cell inner membrane. In terms of biological role, produces ATP from ADP in the presence of a proton gradient across the membrane. The gamma chain is believed to be important in regulating ATPase activity and the flow of protons through the CF(0) complex. The sequence is that of ATP synthase gamma chain from Haemophilus influenzae (strain ATCC 51907 / DSM 11121 / KW20 / Rd).